The chain runs to 434 residues: Serine hydroxymethyltransferase (434 aa).

Residues L133 and 137-139 (GHL) contribute to the (6S)-5,6,7,8-tetrahydrofolate site. K242 carries the N6-(pyridoxal phosphate)lysine modification.

It belongs to the SHMT family. As to quaternary structure, homodimer. The cofactor is pyridoxal 5'-phosphate.

Its subcellular location is the cytoplasm. The catalysed reaction is (6R)-5,10-methylene-5,6,7,8-tetrahydrofolate + glycine + H2O = (6S)-5,6,7,8-tetrahydrofolate + L-serine. Its pathway is one-carbon metabolism; tetrahydrofolate interconversion. It functions in the pathway amino-acid biosynthesis; glycine biosynthesis; glycine from L-serine: step 1/1. Functionally, catalyzes the reversible interconversion of serine and glycine with tetrahydrofolate (THF) serving as the one-carbon carrier. This reaction serves as the major source of one-carbon groups required for the biosynthesis of purines, thymidylate, methionine, and other important biomolecules. Also exhibits THF-independent aldolase activity toward beta-hydroxyamino acids, producing glycine and aldehydes, via a retro-aldol mechanism. In Hyphomicrobium methylovorum, this protein is Serine hydroxymethyltransferase.